The sequence spans 458 residues: tRNA-2-methylthio-N(6)-dimethylallyladenosine synthase (458 aa).

Residues 15–134 (KKVFIKTYGC…LPDLLEQTKQ (120 aa)) form the MTTase N-terminal domain. Residues cysteine 24, cysteine 60, cysteine 97, cysteine 175, cysteine 179, and cysteine 182 each coordinate [4Fe-4S] cluster. Positions 161 to 393 (RKRGVSAFLT…QVLLLEQQNA (233 aa)) constitute a Radical SAM core domain. In terms of domain architecture, TRAM spans 396–457 (RSKIGQTTDV…SNSFVGEMTN (62 aa)).

This sequence belongs to the methylthiotransferase family. MiaB subfamily. In terms of assembly, monomer. Requires [4Fe-4S] cluster as cofactor.

The protein resides in the cytoplasm. It carries out the reaction N(6)-dimethylallyladenosine(37) in tRNA + (sulfur carrier)-SH + AH2 + 2 S-adenosyl-L-methionine = 2-methylsulfanyl-N(6)-dimethylallyladenosine(37) in tRNA + (sulfur carrier)-H + 5'-deoxyadenosine + L-methionine + A + S-adenosyl-L-homocysteine + 2 H(+). Catalyzes the methylthiolation of N6-(dimethylallyl)adenosine (i(6)A), leading to the formation of 2-methylthio-N6-(dimethylallyl)adenosine (ms(2)i(6)A) at position 37 in tRNAs that read codons beginning with uridine. In Bartonella henselae (strain ATCC 49882 / DSM 28221 / CCUG 30454 / Houston 1) (Rochalimaea henselae), this protein is tRNA-2-methylthio-N(6)-dimethylallyladenosine synthase.